The sequence spans 156 residues: Ribonuclease pancreatic (156 aa).

The signal sequence occupies residues Met1–Gly28. Substrate-binding residues include Lys35 and Arg38. His40 (proton acceptor) is an active-site residue. Asn50 and Asn62 each carry an N-linked (GlcNAc...) asparagine glycan. Cystine bridges form between Cys54/Cys112, Cys68/Cys123, Cys86/Cys138, and Cys93/Cys100. Substrate is bound by residues Lys69–Thr73 and Lys94. Asn104 carries an N-linked (GlcNAc...) asparagine glycan. Arg113 contributes to the substrate binding site. His147 acts as the Proton donor in catalysis.

The protein belongs to the pancreatic ribonuclease family. As to quaternary structure, monomer. Interacts with and forms tight 1:1 complexes with RNH1. Dimerization of two such complexes may occur. Interaction with RNH1 inhibits this protein. Pancreas and other tissues and body fluids (indicating it may have other physiological functions besides its role in digestion).

It localises to the secreted. It catalyses the reaction an [RNA] containing cytidine + H2O = an [RNA]-3'-cytidine-3'-phosphate + a 5'-hydroxy-ribonucleotide-3'-[RNA].. The catalysed reaction is an [RNA] containing uridine + H2O = an [RNA]-3'-uridine-3'-phosphate + a 5'-hydroxy-ribonucleotide-3'-[RNA].. Its function is as follows. Endonuclease that catalyzes the cleavage of RNA on the 3' side of pyrimidine nucleotides. Acts on single-stranded and double-stranded RNA. This is Ribonuclease pancreatic (RNASE1) from Pongo pygmaeus (Bornean orangutan).